Here is a 1558-residue protein sequence, read N- to C-terminus: ABC transporter NFT1 (1558 aa).

The Extracellular portion of the chain corresponds to 1 to 29; that stretch reads MIKNGTCPFWERDDLSECARREYIEFKFP. Asparagine 4 carries N-linked (GlcNAc...) asparagine glycosylation. Residues 30–50 form a helical membrane-spanning segment; sequence LFILLTGMIYAFCKVFRAFYL. Over 51-103 the chain is Cytoplasmic; the sequence is RRKNHTNEAPEFEEQGNGNHEYARFSVLRLKSAWESRSFCNVNNRSTFDKFKK. A helical membrane pass occupies residues 104 to 124; it reads FIEGAFIVLQLTIHLYILSNM. Topologically, residues 125–130 are extracellular; that stretch reads PMDNKK. The helical transmembrane segment at 131 to 151 threads the bilayer; that stretch reads FFHQGFLVQMFLWILLLVVIT. Over 152–169 the chain is Cytoplasmic; that stretch reads LRLISASQSFRWVLACKR. Residues 170–190 form a helical membrane-spanning segment; that stretch reads DLWAVSFYSYASLFTLSILPL. Over 191-201 the chain is Extracellular; the sequence is RSVFIGKIKDK. A helical membrane pass occupies residues 202 to 222; it reads IMVKYIISETFIDLALLLLLS. Residues 223-302 lie on the Cytoplasmic side of the membrane; that stretch reads TSSIEGTRYS…SSKKGRLLPN (80 aa). A helical membrane pass occupies residues 303-323; the sequence is IICYFKAVFISQLFLAFVSSF. An ABC transmembrane type-1 1 domain is found at 311–621; that stretch reads FISQLFLAFV…IASTVSLLIQ (311 aa). Residues 324 to 351 lie on the Extracellular side of the membrane; sequence LNFVPSLLMPRILSYVNDPKSQSWNLVS. The helical transmembrane segment at 352–374 threads the bilayer; sequence LYVSSMLVSKIIATTCRGQGLFL. At 375-449 the chain is on the cytoplasmic side; the sequence is GEKGTMQLRT…VMSIDAFKVS (75 aa). Residues 410–434 form a disordered region; it reads NASTSFEENPDSSEAEPRKKSSRKD. The span at 424–434 shows a compositional bias: basic and acidic residues; it reads AEPRKKSSRKD. Residues 450–470 form a helical membrane-spanning segment; the sequence is EAMNTFYLACEAVFMTVTALM. Residues 471–481 are Extracellular-facing; sequence ILYSLLGWSAF. A helical transmembrane segment spans residues 482–504; that stretch reads AGTFALLAMIPLNFWCATFYGNY. Over 505–558 the chain is Cytoplasmic; that stretch reads QADQLILTDKRTSGISEALNSIRVIKLLAWENLFYQKIINVRDGEIRLLKKKAT. The helical transmembrane segment at 559–579 threads the bilayer; it reads IFFLNHLIWFFGPTLVSAITF. Residues 580-584 lie on the Extracellular side of the membrane; it reads SVFIK. A helical transmembrane segment spans residues 585-605; that stretch reads FQNQTLTPTIAFTALSLFAIL. The Cytoplasmic segment spans residues 606 to 953; it reads RTPMDQIAST…KFSAYKWLAD (348 aa). In terms of domain architecture, ABC transporter 1 spans 651-892; that stretch reads FGFEDASMEW…NEFLRESINN (242 aa). Position 686–693 (686–693) interacts with ATP; sequence GPTGSGKS. Positions 892 to 901 are enriched in polar residues; sequence NDSKNTTHNQ. Residues 892 to 926 form a disordered region; sequence NDSKNTTHNQIDLKRSTTSKKTKNGDPEGENSQDE. A helical transmembrane segment spans residues 954–974; the sequence is YFGGLGVVFVFTSSAILIHGI. One can recognise an ABC transmembrane type-1 2 domain in the interval 961–1251; that stretch reads VFVFTSSAIL…IIKVFSSVEL (291 aa). The Extracellular segment spans residues 975-1013; sequence TLSQGFWLRYWLETGSSGSKSTWLYRIVEGHSNIYFILT. The chain crosses the membrane as a helical span at residues 1014-1034; it reads YIVIGFVSSFLTSGKVWIAII. Over 1035-1082 the chain is Cytoplasmic; the sequence is SGTNVTKKIFAKLLSSILYAKLRFHNVTPTGRIMNRFSKDMDIIDQQL. Residues 1083–1105 form a helical membrane-spanning segment; it reads IPNFEGLSYSVVVCLWIILLIGY. Residues 1106–1109 are Extracellular-facing; sequence VTPQ. Residues 1110–1132 traverse the membrane as a helical segment; the sequence is FLLFAIPLCALYYTVCTLYLRAS. Residues 1133–1199 are Cytoplasmic-facing; that stretch reads RELKRIDNIN…ATEWITYRVD (67 aa). The helical transmembrane segment at 1200 to 1220 threads the bilayer; it reads IIGTLVLFSSSVMIIMKASYL. Over 1221-1222 the chain is Extracellular; the sequence is DA. Residues 1223 to 1243 form a helical membrane-spanning segment; it reads GLAGILLSNAFSFTETAQWII. Residues 1244–1558 are Cytoplasmic-facing; it reads KVFSSVELLM…LAKVSFDNKR (315 aa). The ABC transporter 2 domain occupies 1285-1538; it reads VELKNLSLRY…RNTIFYRLCR (254 aa). An ATP-binding site is contributed by 1319–1326; the sequence is GRTGAGKS.

The protein belongs to the ABC transporter superfamily. ABCC family. Conjugate transporter (TC 3.A.1.208) subfamily.

It is found in the membrane. The sequence is that of ABC transporter NFT1 (NFT1) from Saccharomyces cerevisiae (strain YJM789) (Baker's yeast).